Reading from the N-terminus, the 181-residue chain is Peptidyl-prolyl cis-trans isomerase H (181 aa).

Positions 17 to 180 (FFDIALGGVP…QDVIITQCGE (164 aa)) constitute a PPIase cyclophilin-type domain.

The protein belongs to the cyclophilin-type PPIase family. PPIase H subfamily.

The protein resides in the nucleus. It carries out the reaction [protein]-peptidylproline (omega=180) = [protein]-peptidylproline (omega=0). PPIases accelerate the folding of proteins. It catalyzes the cis-trans isomerization of proline imidic peptide bonds in oligopeptides. This chain is Peptidyl-prolyl cis-trans isomerase H (cyp3), found in Aspergillus fumigatus (strain ATCC MYA-4609 / CBS 101355 / FGSC A1100 / Af293) (Neosartorya fumigata).